The primary structure comprises 31 residues: Cytochrome b6-f complex subunit 6 (31 aa).

Residues 4–26 traverse the membrane as a helical segment; the sequence is ITSYFGFLLTALTITSALFIGLS.

It belongs to the PetL family. The 4 large subunits of the cytochrome b6-f complex are cytochrome b6, subunit IV (17 kDa polypeptide, PetD), cytochrome f and the Rieske protein, while the 4 small subunits are PetG, PetL, PetM and PetN. The complex functions as a dimer.

Its subcellular location is the plastid. It is found in the chloroplast thylakoid membrane. Functionally, component of the cytochrome b6-f complex, which mediates electron transfer between photosystem II (PSII) and photosystem I (PSI), cyclic electron flow around PSI, and state transitions. PetL is important for photoautotrophic growth as well as for electron transfer efficiency and stability of the cytochrome b6-f complex. This Lactuca sativa (Garden lettuce) protein is Cytochrome b6-f complex subunit 6.